Consider the following 216-residue polypeptide: Ras-related protein Rab-5C (216 aa).

GTP-binding residues include S30, A31, G33, K34, S35, S36, H47, E48, T53, and G79. Mg(2+) is bound at residue S35. 2 short sequence motifs (switch) span residues 45–57 (QFHE…IGAA) and 78–94 (AGQE…YRGA). T53 contributes to the Mg(2+) binding site. A Phosphoserine modification is found at S85. Positions 134, 135, 137, 165, and 166 each coordinate GTP. The interval 185-216 (NEPQNAAGAPGRTRGVDLQESNPASRSQCCSN) is disordered. Positions 203–216 (QESNPASRSQCCSN) are enriched in polar residues. S-geranylgeranyl cysteine attachment occurs at residues C213 and C214.

The protein belongs to the small GTPase superfamily. Rab family. In terms of assembly, interacts with EEA1 and INCA1. Interacts with GDI1, GDI2, CHML and CHM; phosphorylation at Ser-85 disrupts this interaction. Mg(2+) is required as a cofactor. In terms of processing, phosphorylation of Ser-85 in the switch II region by LRRK2 prevents the association of RAB regulatory proteins, including CHM, CHML and RAB GDP dissociation inhibitors GDI1 and GDI2.

The protein localises to the cell membrane. The protein resides in the early endosome membrane. It localises to the melanosome. It catalyses the reaction GTP + H2O = GDP + phosphate + H(+). With respect to regulation, regulated by guanine nucleotide exchange factors (GEFs) which promote the exchange of bound GDP for free GTP. Regulated by GTPase activating proteins (GAPs) which increase the GTP hydrolysis activity. Inhibited by GDP dissociation inhibitors (GDIs). Functionally, the small GTPases Rab are key regulators of intracellular membrane trafficking, from the formation of transport vesicles to their fusion with membranes. Rabs cycle between an inactive GDP-bound form and an active GTP-bound form that is able to recruit to membranes different sets of downstream effectors directly responsible for vesicle formation, movement, tethering and fusion. This Mus musculus (Mouse) protein is Ras-related protein Rab-5C.